Reading from the N-terminus, the 273-residue chain is Homeobox protein HMX2 (273 aa).

Residues 1 to 154 are disordered; it reads MGSKEDVGKG…TGAAKKKTRT (154 aa). Positions 114–123 are enriched in basic and acidic residues; that stretch reads PDFKEEKERL. Residues 149–208 constitute a DNA-binding region (homeobox); the sequence is KKKTRTVFSRSQVYQLESTFDMKRYLSSSERACLASSLQLTETQVKTWFQNRRNKWKRQL.

It belongs to the HMX homeobox family. As to expression, expressed in the developing CNS, including a specific expression in vestibular structures throughout inner ear development.

It localises to the nucleus. Its function is as follows. Transcription factor involved in specification of neuronal cell types and which is required for inner ear and hypothalamus development. The polypeptide is Homeobox protein HMX2 (Hmx2) (Mus musculus (Mouse)).